We begin with the raw amino-acid sequence, 287 residues long: 4-diphosphocytidyl-2-C-methyl-D-erythritol kinase (287 aa).

K12 is an active-site residue. Residue 97-107 coordinates ATP; it reads PMGGGLGGGSS. D139 is a catalytic residue.

Belongs to the GHMP kinase family. IspE subfamily.

The enzyme catalyses 4-CDP-2-C-methyl-D-erythritol + ATP = 4-CDP-2-C-methyl-D-erythritol 2-phosphate + ADP + H(+). Its pathway is isoprenoid biosynthesis; isopentenyl diphosphate biosynthesis via DXP pathway; isopentenyl diphosphate from 1-deoxy-D-xylulose 5-phosphate: step 3/6. In terms of biological role, catalyzes the phosphorylation of the position 2 hydroxy group of 4-diphosphocytidyl-2C-methyl-D-erythritol. The polypeptide is 4-diphosphocytidyl-2-C-methyl-D-erythritol kinase (Marinobacter nauticus (strain ATCC 700491 / DSM 11845 / VT8) (Marinobacter aquaeolei)).